Here is a 304-residue protein sequence, read N- to C-terminus: uncharacterized protein (304 aa).

This is an uncharacterized protein from Ureaplasma parvum serovar 3 (strain ATCC 700970).